Here is a 299-residue protein sequence, read N- to C-terminus: Oxygen-dependent coproporphyrinogen-III oxidase (299 aa).

Residue Ser-92 participates in substrate binding. Positions 96 and 106 each coordinate a divalent metal cation. Residue His-106 is the Proton donor of the active site. Residue Asn-108 to Arg-110 coordinates substrate. 2 residues coordinate a divalent metal cation: His-145 and His-175. The important for dimerization stretch occupies residues Tyr-240–Glu-275. A substrate-binding site is contributed by Gly-258–Arg-260.

Belongs to the aerobic coproporphyrinogen-III oxidase family. In terms of assembly, homodimer. A divalent metal cation is required as a cofactor.

Its subcellular location is the cytoplasm. The catalysed reaction is coproporphyrinogen III + O2 + 2 H(+) = protoporphyrinogen IX + 2 CO2 + 2 H2O. Its pathway is porphyrin-containing compound metabolism; protoporphyrin-IX biosynthesis; protoporphyrinogen-IX from coproporphyrinogen-III (O2 route): step 1/1. In terms of biological role, involved in the heme biosynthesis. Catalyzes the aerobic oxidative decarboxylation of propionate groups of rings A and B of coproporphyrinogen-III to yield the vinyl groups in protoporphyrinogen-IX. In Salmonella dublin (strain CT_02021853), this protein is Oxygen-dependent coproporphyrinogen-III oxidase.